Consider the following 450-residue polypeptide: UDP-N-acetylmuramoylalanine--D-glutamate ligase (450 aa).

ATP is bound at residue 119–125; it reads GSNGKTT.

It belongs to the MurCDEF family.

The protein resides in the cytoplasm. It carries out the reaction UDP-N-acetyl-alpha-D-muramoyl-L-alanine + D-glutamate + ATP = UDP-N-acetyl-alpha-D-muramoyl-L-alanyl-D-glutamate + ADP + phosphate + H(+). Its pathway is cell wall biogenesis; peptidoglycan biosynthesis. Functionally, cell wall formation. Catalyzes the addition of glutamate to the nucleotide precursor UDP-N-acetylmuramoyl-L-alanine (UMA). The sequence is that of UDP-N-acetylmuramoylalanine--D-glutamate ligase from Streptococcus gordonii (strain Challis / ATCC 35105 / BCRC 15272 / CH1 / DL1 / V288).